The following is a 215-amino-acid chain: CASP-like protein 1E1 (215 aa).

The Cytoplasmic segment spans residues 1–51 (MESSRGKPGLNGSGGGAAAFDYSSRRGYYTGAGAALPPLAAGSRAPPVDPC). A helical transmembrane segment spans residues 52-72 (CVALRVFVLLGTLASAVVMAA). Over 73–103 (DRQSTTVQIAAGEQLAPPLRVPVTAKWTYSS) the chain is Extracellular. A helical transmembrane segment spans residues 104–124 (AFVYFVVANAMVFAFSAAALA). Residues 125–130 (AVRRRS) lie on the Cytoplasmic side of the membrane. Residues 131-151 (AVVPVMVGDLVAMALLFSAVG) form a helical membrane-spanning segment. Residues 152-185 (AAAQFGLLGERGNAHVRWAKVCDVYGPFCERAMA) are Extracellular-facing. Residues 186-206 (AVVVALIAAFADLVLLMLTIL) traverse the membrane as a helical segment. Topologically, residues 207–215 (TIHKASSYY) are cytoplasmic.

It belongs to the Casparian strip membrane proteins (CASP) family. Homodimer and heterodimers.

The protein localises to the cell membrane. This Oryza sativa subsp. indica (Rice) protein is CASP-like protein 1E1.